The following is a 241-amino-acid chain: MADNEEDVEAEEEYTELTDISGVGPSKAESLREAGFESVEDVRGADQSALADVSGIGNALAARIKADVGGLEVESETEAEVEEEGGEEAPDEDVETELQARGLTEKTPDLSDEDARLLTQRHRVGKPQFNRQDHHKKKRVSTSWRKPRGQLSKQRRGIKGKGDTVEAGFRSPTAVRGKHPSGFEEVRVHNVDDLEGVDGDTEAVRIASKVGARKRERIEEEAEDAGIRVLNPTYVEVEVSE.

Residues 1–16 (MADNEEDVEAEEEYTE) show a composition bias toward acidic residues. 2 disordered regions span residues 1–47 (MADN…GADQ) and 68–182 (VGGL…HPSG). The span at 29–44 (ESLREAGFESVEDVRG) shows a compositional bias: basic and acidic residues. A compositionally biased stretch (acidic residues) spans 73-96 (VESETEAEVEEEGGEEAPDEDVET). Residues 103–116 (LTEKTPDLSDEDAR) show a composition bias toward basic and acidic residues. The segment covering 133–159 (DHHKKKRVSTSWRKPRGQLSKQRRGIK) has biased composition (basic residues).

This sequence belongs to the eukaryotic ribosomal protein eL32 family. In terms of assembly, part of the 50S ribosomal subunit. Interacts weakly with protein L15.

Its function is as follows. Binds to the 23S rRNA. The protein is Large ribosomal subunit protein eL32 (rpl32e) of Haloarcula marismortui (strain ATCC 43049 / DSM 3752 / JCM 8966 / VKM B-1809) (Halobacterium marismortui).